The sequence spans 609 residues: UvrABC system protein C (609 aa).

The region spanning Ser15 to Val93 is the GIY-YIG domain. The UVR domain occupies Gln202 to Val237.

Belongs to the UvrC family. Interacts with UvrB in an incision complex.

The protein localises to the cytoplasm. The UvrABC repair system catalyzes the recognition and processing of DNA lesions. UvrC both incises the 5' and 3' sides of the lesion. The N-terminal half is responsible for the 3' incision and the C-terminal half is responsible for the 5' incision. The sequence is that of UvrABC system protein C from Shewanella denitrificans (strain OS217 / ATCC BAA-1090 / DSM 15013).